The following is a 165-amino-acid chain: UPF0114 protein in repA1-repA2 intergenic region (165 aa).

The next 3 membrane-spanning stretches (helical) occupy residues 10–32, 53–75, and 134–156; these read YASRWLMFPVYIGLSLGFILLTL, LVLVVLSLIDISLVGGLLVMVMF, and DQIMWCVLIHLTFVISAFGMACI.

The protein belongs to the UPF0114 family.

It is found in the cell membrane. In Buchnera aphidicola subsp. Baizongia pistaciae (strain Bp), this protein is UPF0114 protein in repA1-repA2 intergenic region.